The chain runs to 113 residues: Large ribosomal subunit protein P2B (113 aa).

A disordered region spans residues 66 to 113; that stretch reads PSGGGAIDMGAPAAVAGGGAAPAEEAKKEEKVEEKEESDEDMGFSLFD. Over residues 89-99 the composition is skewed to basic and acidic residues; that stretch reads EEAKKEEKVEE.

The protein belongs to the eukaryotic ribosomal protein P1/P2 family. As to quaternary structure, P1 and P2 exist as dimers at the large ribosomal subunit. In terms of processing, phosphorylated.

Functionally, plays an important role in the elongation step of protein synthesis. This is Large ribosomal subunit protein P2B (RPP2B) from Zea mays (Maize).